A 585-amino-acid chain; its full sequence is Rab GTPase-binding effector protein 2 (585 aa).

Residue A2 is modified to N-acetylalanine. Residues 27-183 (QEGAKVEAES…ELIQEIQRRP (157 aa)) adopt a coiled-coil conformation. Disordered stretches follow at residues 178–265 (EIQR…ASLV), 381–408 (ENQG…EESL), and 491–515 (EEQS…EEAQ). Residues S188, S192, S198, and S202 each carry the phosphoserine modification. A coiled-coil region spans residues 288-540 (NQWEQLQLEG…QAELETSEQV (253 aa)). The span at 491 to 501 (EEQSKAKRQEV) shows a compositional bias: basic and acidic residues.

It belongs to the rabaptin family. Heterodimer with RABGEF1. The dimer binds RAB5A that has been activated by GTP-binding. Interacts with SDCCAG8; this interaction is important for ciliogenesis regulation. Interacts with RAB4; this interaction may mediate VEGFR2 cell surface expression.

Its subcellular location is the cytoplasm. The protein resides in the early endosome. It is found in the cytoskeleton. The protein localises to the microtubule organizing center. It localises to the centrosome. Its subcellular location is the cilium basal body. Plays a role in membrane trafficking and in homotypic early endosome fusion. Participates in arteriogenesis by regulating vascular endothelial growth factor receptor 2/VEGFR2 cell surface expression and endosomal trafficking. By interacting with SDCCAG8, localizes to centrosomes and plays a critical role in ciliogenesis. The protein is Rab GTPase-binding effector protein 2 (RABEP2) of Bos taurus (Bovine).